The sequence spans 436 residues: Protein Z-dependent protease inhibitor (436 aa).

An N-terminal signal peptide occupies residues 1 to 20; the sequence is MRVVSSLFLPVLLAEVWLVS. Residues N23, N42, and N69 are each glycosylated (N-linked (GlcNAc...) asparagine). A heparin-binding region spans residues 128 to 145; sequence AGPLILPALFKRVKETFS. Residues N172, N189, and N287 are each glycosylated (N-linked (GlcNAc...) asparagine).

This sequence belongs to the serpin family. Phosphorylated by FAM20C in the extracellular medium. In terms of tissue distribution, expressed by the liver and secreted in plasma.

It is found in the secreted. Functionally, inhibits activity of the coagulation protease factor Xa in the presence of PROZ, calcium and phospholipids. Also inhibits factor XIa in the absence of cofactors. In Rattus norvegicus (Rat), this protein is Protein Z-dependent protease inhibitor (Serpina10).